Here is a 453-residue protein sequence, read N- to C-terminus: Tubulin alpha chain (453 aa).

Residue glutamine 11 participates in GTP binding. Lysine 40 is subject to N6-acetyllysine. Residues glutamate 71, glycine 144, threonine 145, threonine 179, asparagine 206, and asparagine 228 each contribute to the GTP site. Glutamate 71 contacts Mg(2+). The active site involves glutamate 254.

Belongs to the tubulin family. Dimer of alpha and beta chains. A typical microtubule is a hollow water-filled tube with an outer diameter of 25 nm and an inner diameter of 15 nM. Alpha-beta heterodimers associate head-to-tail to form protofilaments running lengthwise along the microtubule wall with the beta-tubulin subunit facing the microtubule plus end conferring a structural polarity. Microtubules usually have 13 protofilaments but different protofilament numbers can be found in some organisms and specialized cells. Mg(2+) is required as a cofactor. Post-translationally, undergoes a tyrosination/detyrosination cycle, the cyclic removal and re-addition of a C-terminal tyrosine residue by the enzymes tubulin tyrosine carboxypeptidase (TTCP) and tubulin tyrosine ligase (TTL), respectively. Acetylation of alpha chains at Lys-40 stabilizes microtubules and affects affinity and processivity of microtubule motors. This modification has a role in multiple cellular functions, ranging from cell motility, cell cycle progression or cell differentiation to intracellular trafficking and signaling.

It is found in the cytoplasm. Its subcellular location is the cytoskeleton. It catalyses the reaction GTP + H2O = GDP + phosphate + H(+). Its function is as follows. Tubulin is the major constituent of microtubules, a cylinder consisting of laterally associated linear protofilaments composed of alpha- and beta-tubulin heterodimers. Microtubules grow by the addition of GTP-tubulin dimers to the microtubule end, where a stabilizing cap forms. Below the cap, tubulin dimers are in GDP-bound state, owing to GTPase activity of alpha-tubulin. The polypeptide is Tubulin alpha chain (Plasmodium falciparum (isolate K1 / Thailand)).